The sequence spans 345 residues: N-acetyl-gamma-glutamyl-phosphate reductase (345 aa).

Cys-149 is a catalytic residue.

This sequence belongs to the NAGSA dehydrogenase family. Type 1 subfamily.

It is found in the cytoplasm. It catalyses the reaction N-acetyl-L-glutamate 5-semialdehyde + phosphate + NADP(+) = N-acetyl-L-glutamyl 5-phosphate + NADPH + H(+). It functions in the pathway amino-acid biosynthesis; L-arginine biosynthesis; N(2)-acetyl-L-ornithine from L-glutamate: step 3/4. Functionally, catalyzes the NADPH-dependent reduction of N-acetyl-5-glutamyl phosphate to yield N-acetyl-L-glutamate 5-semialdehyde. This chain is N-acetyl-gamma-glutamyl-phosphate reductase, found in Bacillus cereus (strain B4264).